Here is a 1809-residue protein sequence, read N- to C-terminus: Proprotein convertase subtilisin/kexin type 5 (1809 aa).

Residues 1 to 34 (MDWGWGSRCCRPGRRDLLCVLALLAGCLLPVCRT) form the signal peptide. Residues 35 to 116 (RVYTNHWAVK…QQVVKKRTKR (82 aa)) constitute a propeptide that is removed on maturation. The Extracellular segment spans residues 117-1700 (DYDLSRAQST…DTVFHEHTKT (1584 aa)). The Peptidase S8 domain maps to 136 to 455 (MWYMHCSDNT…FGLMDAEAMV (320 aa)). Active-site charge relay system residues include aspartate 173 and histidine 214. Residues asparagine 227 and asparagine 383 are each glycosylated (N-linked (GlcNAc...) asparagine). Catalysis depends on serine 388, which acts as the Charge relay system. A P/Homo B domain is found at 463 to 603 (TVPQQHVCVE…SLVLYGTSVQ (141 aa)). The short motif at 521 to 523 (RGD) is the Cell attachment site element. 21 FU repeats span residues 632 to 682 (EDYA…GHFH), 685 to 732 (KKRC…GSYQ), 736 to 779 (KNIC…GQFF), 781 to 826 (GHDC…SYYL), 834 to 881 (YKSC…GEYI), 884 to 929 (QGHC…WKFE), 931 to 964 (KKQC…QDSE), 965 to 1010 (YGEC…KTFG), 1012 to 1054 (KWEC…GFYG), 1058 to 1099 (LGEC…PTWP), 1137 to 1179 (TRQY…GTWL), 1183 to 1230 (SSSC…GFYA), 1232 to 1276 (DGVC…KHVA), 1278 to 1321 (EGVC…NFYP), 1323 to 1369 (MRQC…GTYK), 1373 to 1418 (NDEC…IEYW), 1422 to 1467 (SHRC…GYHT), 1471 to 1516 (SHQC…GYYG), 1520 to 1567 (SGRC…HYYA), 1571 to 1616 (AQTC…GEYR), and 1622 to 1669 (NFNC…SHPH). The tract at residues 638-1685 (CDPECSEVGC…DCQSSTDECI (1048 aa)) is CRM (Cys-rich motif). A glycan (N-linked (GlcNAc...) asparagine) is linked at asparagine 667. Residues asparagine 754, asparagine 804, and asparagine 854 are each glycosylated (N-linked (GlcNAc...) asparagine). N-linked (GlcNAc...) asparagine glycans are attached at residues asparagine 1642 and asparagine 1664. A helical transmembrane segment spans residues 1701–1721 (ALLVTSGAMLLLLLGAAVVVW). Topologically, residues 1722–1809 (RKSRSQPVAK…EYDDESYSYQ (88 aa)) are cytoplasmic. AC stretches follow at residues 1757–1776 (VIEY…IVYM) and 1788–1809 (YGLL…YSYQ).

The protein belongs to the peptidase S8 family. In terms of tissue distribution, expressed in the intestine, brain, adrenal gland, anterior pituitary, thyroid, ovaries, testis and lung. Highest levels are found in the gut, duodenum, jejunum and ileum. Expression is higher in female than in male reproductive organs.

Its subcellular location is the secreted. It is found in the endomembrane system. Functionally, serine endoprotease that processes various proproteins by cleavage at paired basic amino acids, recognizing the RXXX[KR]R consensus motif. Likely functions in the constitutive and regulated secretory pathways. Plays an essential role in pregnancy establishment by proteolytic activation of a number of important factors such as BMP2, CALD1 and alpha-integrins. May be responsible for the maturation of gastrointestinal peptides. May be involved in the cellular proliferation of adrenal cortex via the activation of growth factors. This Rattus norvegicus (Rat) protein is Proprotein convertase subtilisin/kexin type 5 (Pcsk5).